Reading from the N-terminus, the 332-residue chain is Cytoskeleton protein RodZ (332 aa).

Residues 1–111 lie on the Cytoplasmic side of the membrane; the sequence is MNTETTQDTT…LKKSRKKRDG (111 aa). Positions 19–71 constitute an HTH cro/C1-type domain; sequence LREARERLGLTQQTIAERLCLKITTVRDIEDGTTPADLAPTFLRGYIRSYAKL. The segment at residues 30–49 is a DNA-binding region (H-T-H motif); the sequence is QQTIAERLCLKITTVRDIED. A helical; Signal-anchor for type II membrane protein membrane pass occupies residues 112-132; that stretch reads WLMIITWLVVLVVLGLTGAWW. At 133-332 the chain is on the periplasmic side; it reads WQNHQAQQAE…QVARLTLTAE (200 aa). A disordered region spans residues 149 to 225; sequence HASSMQSQTE…PSQANATQSQ (77 aa). Polar residues-rich tracts occupy residues 151–160 and 168–182; these read SSMQSQTEGQ and SAPQETSTAGSAATP. Residues 190–225 are compositionally biased toward low complexity; sequence SATIAATPSTPPSSTTASSAAPSSQSPSQANATQSQ.

This sequence belongs to the RodZ family.

The protein localises to the cell inner membrane. In terms of biological role, cytoskeletal protein that is involved in cell-shape control through regulation of the length of the long axis. This chain is Cytoskeleton protein RodZ, found in Pectobacterium atrosepticum (strain SCRI 1043 / ATCC BAA-672) (Erwinia carotovora subsp. atroseptica).